The primary structure comprises 102 residues: MYAVVRTGGKQYKVSEGDFLKVEKLEGAVGDTIELKDILMVGGETVKIGTPLVPSASVVGKIVEQGKDKKILVFKSKKRKDSKKLRGHRQPRTVLKIEKING.

Belongs to the bacterial ribosomal protein bL21 family. Part of the 50S ribosomal subunit. Contacts protein L20.

This protein binds to 23S rRNA in the presence of protein L20. The polypeptide is Large ribosomal subunit protein bL21 (Geobacter metallireducens (strain ATCC 53774 / DSM 7210 / GS-15)).